Here is a 196-residue protein sequence, read N- to C-terminus: ATP-dependent Clp protease proteolytic subunit (196 aa).

Ser101 serves as the catalytic Nucleophile. The active site involves His126.

The protein belongs to the peptidase S14 family. Component of the chloroplastic Clp protease core complex.

The protein resides in the plastid. Its subcellular location is the chloroplast stroma. It carries out the reaction Hydrolysis of proteins to small peptides in the presence of ATP and magnesium. alpha-casein is the usual test substrate. In the absence of ATP, only oligopeptides shorter than five residues are hydrolyzed (such as succinyl-Leu-Tyr-|-NHMec, and Leu-Tyr-Leu-|-Tyr-Trp, in which cleavage of the -Tyr-|-Leu- and -Tyr-|-Trp bonds also occurs).. Cleaves peptides in various proteins in a process that requires ATP hydrolysis. Has a chymotrypsin-like activity. Plays a major role in the degradation of misfolded proteins. This Spinacia oleracea (Spinach) protein is ATP-dependent Clp protease proteolytic subunit.